Reading from the N-terminus, the 235-residue chain is Casparian strip membrane protein 2 (235 aa).

The interval 1 to 46 is disordered; sequence MSGSDTSGSVHVDEHGHGKASSSYDGAGAPAPAPAPFQGHRKAGSG. Residues 1–67 lie on the Cytoplasmic side of the membrane; the sequence is MSGSDTSGSV…GSGGDGLRRC (67 aa). A helical membrane pass occupies residues 68–88; sequence LGLIDFVLRVAAFGPTLAAAI. The Extracellular segment spans residues 89–115; it reads SIGTSDERLSVFTNYFQFRARFDDFPA. Residues 116–136 form a helical membrane-spanning segment; the sequence is FEFFIVANAIAAGYMVLSLPF. Residues 137-150 are Cytoplasmic-facing; that stretch reads SAATIMSSKATGVK. Residues 151–171 form a helical membrane-spanning segment; it reads LLLLICDTIMVGLLTAAASAA. The Extracellular portion of the chain corresponds to 172 to 203; that stretch reads AAMVYVAHEGNLRANWVPICLQFHGFCQRTSG. A helical membrane pass occupies residues 204–224; it reads AVIASFLAVFVLMVLIVMAAF. Topologically, residues 225 to 235 are cytoplasmic; sequence TMPRRTHHTAS.

It belongs to the Casparian strip membrane proteins (CASP) family. In terms of assembly, homodimer and heterodimers.

It is found in the cell membrane. Regulates membrane-cell wall junctions and localized cell wall deposition. Required for establishment of the Casparian strip membrane domain (CSD) and the subsequent formation of Casparian strips, a cell wall modification of the root endodermis that determines an apoplastic barrier between the intraorganismal apoplasm and the extraorganismal apoplasm and prevents lateral diffusion. This chain is Casparian strip membrane protein 2, found in Oryza sativa subsp. indica (Rice).